Consider the following 240-residue polypeptide: Sec-independent protein translocase protein TatC (240 aa).

Helical transmembrane passes span 15 to 35 (IISI…AKYV), 61 to 81 (LFIL…PVIL), 103 to 123 (LLLG…FIVL), 152 to 172 (FVLK…VLYV), 191 to 211 (FIVI…TQVL), and 212 to 232 (MAIP…LATR).

This sequence belongs to the TatC family. Forms a complex with TatA.

The protein localises to the cell inner membrane. Its function is as follows. Part of the twin-arginine translocation (Tat) system that transports large folded proteins containing a characteristic twin-arginine motif in their signal peptide across membranes. This chain is Sec-independent protein translocase protein TatC, found in Aquifex aeolicus (strain VF5).